A 324-amino-acid polypeptide reads, in one-letter code: Glyoxylate/hydroxypyruvate reductase B (324 aa).

Active-site residues include R237 and E266. The Proton donor role is filled by H285.

It belongs to the D-isomer specific 2-hydroxyacid dehydrogenase family. GhrB subfamily. Homodimer.

It localises to the cytoplasm. It carries out the reaction glycolate + NADP(+) = glyoxylate + NADPH + H(+). The catalysed reaction is (R)-glycerate + NAD(+) = 3-hydroxypyruvate + NADH + H(+). The enzyme catalyses (R)-glycerate + NADP(+) = 3-hydroxypyruvate + NADPH + H(+). Its function is as follows. Catalyzes the NADPH-dependent reduction of glyoxylate and hydroxypyruvate into glycolate and glycerate, respectively. This Shigella dysenteriae serotype 1 (strain Sd197) protein is Glyoxylate/hydroxypyruvate reductase B.